The chain runs to 243 residues: tRNA pseudouridine synthase A (243 aa).

Asp-51 (nucleophile) is an active-site residue. Residue Tyr-111 participates in substrate binding.

The protein belongs to the tRNA pseudouridine synthase TruA family. In terms of assembly, homodimer.

It catalyses the reaction uridine(38/39/40) in tRNA = pseudouridine(38/39/40) in tRNA. Functionally, formation of pseudouridine at positions 38, 39 and 40 in the anticodon stem and loop of transfer RNAs. In Neorickettsia sennetsu (strain ATCC VR-367 / Miyayama) (Ehrlichia sennetsu), this protein is tRNA pseudouridine synthase A.